Reading from the N-terminus, the 644-residue chain is uncharacterized protein (644 aa).

Disordered regions lie at residues 1–35 and 48–106; these read MSSH…EYCS and GNSH…SHHN. Ser-28 is modified (phosphoserine). Over residues 58 to 70 the composition is skewed to low complexity; sequence NGASSSNNNVAKS. Positions 83–106 are enriched in polar residues; sequence YDSTSNSNEPISFNEPDSSNSHHN. The next 12 membrane-spanning stretches (helical) occupy residues 131-151, 190-210, 218-238, 245-265, 286-306, 314-334, 398-418, 435-455, 522-542, 546-566, 583-603, and 614-634; these read ILPL…PLLF, AAFG…YGTM, LVLF…LYQS, YFVL…TVVA, LNFA…GFIV, YVFY…WLIL, VLLA…MGLL, LILS…FPLL, VWNA…LAVA, VALF…PCVQ, AAFA…YAFV, and NMIF…IFFM.

It localises to the membrane. This is an uncharacterized protein from Schizosaccharomyces pombe (strain 972 / ATCC 24843) (Fission yeast).